A 504-amino-acid polypeptide reads, in one-letter code: Maturase K (504 aa).

The protein belongs to the intron maturase 2 family. MatK subfamily.

It localises to the plastid. The protein resides in the chloroplast. Its function is as follows. Usually encoded in the trnK tRNA gene intron. Probably assists in splicing its own and other chloroplast group II introns. The protein is Maturase K of Quercus cerris (Turkey oak).